Reading from the N-terminus, the 548-residue chain is Chaperonin GroEL (548 aa).

Residues 30–33, Lys-51, 87–91, Gly-415, 479–481, and Asp-495 contribute to the ATP site; these read TLGP, DGTTT, and NAA.

It belongs to the chaperonin (HSP60) family. In terms of assembly, forms a cylinder of 14 subunits composed of two heptameric rings stacked back-to-back. Interacts with the co-chaperonin GroES.

The protein resides in the cytoplasm. It carries out the reaction ATP + H2O + a folded polypeptide = ADP + phosphate + an unfolded polypeptide.. In terms of biological role, together with its co-chaperonin GroES, plays an essential role in assisting protein folding. The GroEL-GroES system forms a nano-cage that allows encapsulation of the non-native substrate proteins and provides a physical environment optimized to promote and accelerate protein folding. In Escherichia fergusonii (strain ATCC 35469 / DSM 13698 / CCUG 18766 / IAM 14443 / JCM 21226 / LMG 7866 / NBRC 102419 / NCTC 12128 / CDC 0568-73), this protein is Chaperonin GroEL.